The sequence spans 261 residues: Kallikrein-2 (261 aa).

A signal peptide spans 1 to 18; sequence MWDLVLSIALSVGCTGAV. Positions 19–24 are cleaved as a propeptide — activation peptide; sequence PLIQSR. In terms of domain architecture, Peptidase S1 spans 25–258; that stretch reads IVGGWECEKH…YRKWIKDTIA (234 aa). 5 disulfides stabilise this stretch: Cys-31-Cys-173, Cys-50-Cys-66, Cys-152-Cys-219, Cys-184-Cys-198, and Cys-209-Cys-234. Catalysis depends on His-65, which acts as the Charge relay system. A glycan (N-linked (GlcNAc...) asparagine) is linked at Asn-102. The active-site Charge relay system is Asp-120. Ser-213 functions as the Charge relay system in the catalytic mechanism.

Belongs to the peptidase S1 family. Kallikrein subfamily.

It catalyses the reaction Preferential cleavage of Arg-|-Xaa bonds in small molecule substrates. Highly selective action to release kallidin (lysyl-bradykinin) from kininogen involves hydrolysis of Met-|-Xaa or Leu-|-Xaa.. Its function is as follows. Glandular kallikreins cleave Met-Lys and Arg-Ser bonds in kininogen to release Lys-bradykinin. This Homo sapiens (Human) protein is Kallikrein-2 (KLK2).